Here is a 257-residue protein sequence, read N- to C-terminus: Phycoerythrobilin:ferredoxin oxidoreductase (257 aa).

Belongs to the HY2 family.

The catalysed reaction is (3Z)-phycoerythrobilin + oxidized 2[4Fe-4S]-[ferredoxin] = 15,16-dihydrobiliverdin + reduced 2[4Fe-4S]-[ferredoxin] + 2 H(+). Catalyzes the two-electron reduction of the C2 and C3(1) diene system of 15,16-dihydrobiliverdin. This is Phycoerythrobilin:ferredoxin oxidoreductase (pebB) from Prochlorococcus marinus subsp. pastoris (strain CCMP1986 / NIES-2087 / MED4).